The following is a 466-amino-acid chain: MPHSWDYDAVVIGSGPGGEGAAMGLVKQGARVAVIERYHNVGGGCTHWGTIPSKALRHAVSRIIEFNQNPLYSDHSRLLRSSFADILNHADNVINQQTRMRQGFYERNHCEILQGNAHFIDEHTLALECHDGTVETLTAEKFVIACGSRPYHPNDVDFSHPRIYDSDSILSLHHEPRHVIIYGAGVIGCEYASIFRGMDVKVDLINTRDRLLAFLDQEMSDSLSYHFWNSGVVIRHNEEYEKIEGCDDGVIMHLKSGKKLKADCLLYANGRTGNTDSLALENIGLETDSRGQLKVNSMYQTALPHVYAVGDVIGYPSLASAAYDQGRIAAQALVKGEATAHLIEDIPTGIYTIPEISSVGKTEQQLTAMKVPYEVGRAQFKHLARAQIVGMNVGTLKILFHRETKEILGIHCFGERAAEIIHIGQAIMEQKGGGNTIEYFVNTTFNYPTMAEAYRVAALNGLNRLF.

Glu36 to Cys45 lines the FAD pocket.

The protein belongs to the class-I pyridine nucleotide-disulfide oxidoreductase family. The cofactor is FAD.

The protein resides in the cytoplasm. The enzyme catalyses NAD(+) + NADPH = NADH + NADP(+). Conversion of NADPH, generated by peripheral catabolic pathways, to NADH, which can enter the respiratory chain for energy generation. This Salmonella paratyphi A (strain ATCC 9150 / SARB42) protein is Soluble pyridine nucleotide transhydrogenase.